Consider the following 742-residue polypeptide: Potassium transporter 19 (742 aa).

Residues 1–46 (MSVQEDGAARPEPDVLRRHDSLYGDAEKVSNNKRHGAGGSWARTLQ) are Cytoplasmic-facing. A helical transmembrane segment spans residues 47-67 (LAFQSIGVVYGDVGTSPLYVY). The Extracellular segment spans residues 68–83 (SSTFPNGIKHPDDLVG). Residues 84–104 (VLSLILYTLILIPMVKYVFIV) form a helical membrane-spanning segment. Residues 105–170 (LYANDNGDGG…QKLESSNAAK (66 aa)) lie on the Cytoplasmic side of the membrane. The helical transmembrane segment at 171–191 (IALFTITILGTSMVMGDGTLT) threads the bilayer. Over 192 to 206 (PAISVLSAVSGIREK) the chain is Extracellular. A helical membrane pass occupies residues 207–227 (APNLTQSQVVWISVAILFVLF). Over 228–236 (SMQRFGTDK) the chain is Cytoplasmic. Residues 237–257 (VGYTFAPVISVWFLLIAGIGM) traverse the membrane as a helical segment. Topologically, residues 258-287 (YNLTVHEITILRAFNPKYIVDYFRRNGKEA) are extracellular. Asn-259 carries an N-linked (GlcNAc...) asparagine glycan. A helical membrane pass occupies residues 288 to 308 (WVSLGGVVLCITGTEAMFADL). Topologically, residues 309–317 (GHFNIRAIQ) are cytoplasmic. The chain crosses the membrane as a helical span at residues 318 to 338 (LSFTCVLFPSVALCYMGQAAY). At 339–352 (LRKFPENVGDTFYR) the chain is on the extracellular side. Residues 353–373 (SIPAPLFWPVFVVAIMGAIIA) form a helical membrane-spanning segment. Over 374 to 409 (SQAMLSGAFAILSKALSLGCFPRVEVVHTSNKYEGQ) the chain is Cytoplasmic. The helical transmembrane segment at 410 to 430 (VYIPEVNFLIGAASVAVTLAF) threads the bilayer. The Extracellular segment spans residues 431–441 (QTTANIGNAYG). The chain crosses the membrane as a helical span at residues 442 to 462 (ICVVTVFSITTHLMTVVMLLI). The Cytoplasmic segment spans residues 463 to 468 (WKVRLP). Residues 469–489 (FIAAFYAAFGLAEFLYLSSIL) traverse the membrane as a helical segment. At 490–495 (SKFAEG) the chain is on the extracellular side. A helical transmembrane segment spans residues 496-516 (GYLPFCFSLVLMALMATWHYV). Topologically, residues 517-742 (HVKRYWYELD…LLKVGITYEI (226 aa)) are cytoplasmic.

This sequence belongs to the HAK/KUP transporter (TC 2.A.72.3) family.

It localises to the membrane. Functionally, high-affinity potassium transporter. The sequence is that of Potassium transporter 19 (HAK19) from Oryza sativa subsp. japonica (Rice).